A 218-amino-acid polypeptide reads, in one-letter code: Chymotrypsin-2 (218 aa).

Positions 1 to 218 constitute a Peptidase S1 domain; sequence IVGGTDAPRG…FLDWIQKNQL (218 aa). A disulfide bridge connects residues Cys-25 and Cys-40. Residues His-39 and Asp-84 each act as charge relay system in the active site. Cystine bridges form between Cys-148–Cys-161 and Cys-171–Cys-195. The Charge relay system role is filled by Ser-175.

This sequence belongs to the peptidase S1 family.

The protein resides in the secreted. Its subcellular location is the extracellular space. The enzyme catalyses Preferential cleavage: Tyr-|-Xaa, Trp-|-Xaa, Phe-|-Xaa, Leu-|-Xaa.. This Vespa crabro (European hornet) protein is Chymotrypsin-2.